The following is a 787-amino-acid chain: Bifunctional dethiobiotin synthetase/adenosylmethionine-8-amino-7-oxononanoate aminotransferase (787 aa).

ATP is bound at residue 23–28 (DVGKTI). Threonine 27 is a binding site for Mg(2+). Threonine 54 serves as a coordination point for substrate. Positions 61 and 123 each coordinate Mg(2+). ATP contacts are provided by residues 123-126 (ETAG) and 184-185 (KD). 323-324 (WW) is a (8S)-8-amino-7-oxononanoate binding site. Residue 384-385 (GS) coordinates pyridoxal 5'-phosphate. Tyrosine 421 is a binding site for (8S)-8-amino-7-oxononanoate. A pyridoxal 5'-phosphate-binding site is contributed by aspartate 582. Lysine 611 and glycine 645 together coordinate (8S)-8-amino-7-oxononanoate. Pyridoxal 5'-phosphate is bound at residue 646-647 (HS). Arginine 756 contributes to the (8S)-8-amino-7-oxononanoate binding site.

In the N-terminal section; belongs to the dethiobiotin synthetase family. The protein in the C-terminal section; belongs to the class-III pyridoxal-phosphate-dependent aminotransferase family. BioA subfamily. In terms of assembly, homodimer. Mg(2+) is required as a cofactor. Pyridoxal 5'-phosphate serves as cofactor.

The protein localises to the mitochondrion matrix. It catalyses the reaction (7R,8S)-7,8-diammoniononanoate + CO2 + ATP = (4R,5S)-dethiobiotin + ADP + phosphate + 3 H(+). It carries out the reaction (8S)-8-amino-7-oxononanoate + S-adenosyl-L-methionine = S-adenosyl-4-methylsulfanyl-2-oxobutanoate + (7R,8S)-7,8-diammoniononanoate. It functions in the pathway cofactor biosynthesis; biotin biosynthesis; biotin from 7,8-diaminononanoate: step 1/2. Its pathway is cofactor biosynthesis; biotin biosynthesis; 7,8-diaminononanoate from 8-amino-7-oxononanoate (SAM route): step 1/1. In terms of biological role, bifunctional enzyme; part of the cluster involved in the biosynthesis of biotin (also known as vitamin B8 or vitamin H), a water-soluble vitamin that functions as a prosthetic group of many carboxylases, such as acetyl-CoA carboxylase and pyruvate carboxylase. Catalyzes a mechanistically unusual reaction, the ATP-dependent insertion of CO2 between the N7 and N8 nitrogen atoms of 7,8-diaminopelargonic acid (DAPA) to form an ureido ring. Also catalyzes the transfer of the alpha-amino group from S-adenosyl-L-methionine (SAM) to 7-keto-8-aminopelargonic acid (KAPA) to form 7,8-diaminopelargonic acid (DAPA). It is the only animotransferase known to utilize SAM as an amino donor. This chain is Bifunctional dethiobiotin synthetase/adenosylmethionine-8-amino-7-oxononanoate aminotransferase, found in Emericella nidulans (strain FGSC A4 / ATCC 38163 / CBS 112.46 / NRRL 194 / M139) (Aspergillus nidulans).